A 620-amino-acid chain; its full sequence is Probable protein arginine N-methyltransferase 3 (620 aa).

The segment covering 1–17 (MATREHELRPEQERLGE) has biased composition (basic and acidic residues). Residues 1–45 (MATREHELRPEQERLGEDREEYEDGEEEEEEGEEGWDDWESDGDD) are disordered. The segment covering 18–45 (DREEYEDGEEEEEEGEEGWDDWESDGDD) has biased composition (acidic residues). The C2H2-type 1 zinc finger occupies 55 to 78 (LLCLFCSARFDSESSLFSHCASEH). The C2H2-type 2; degenerate zinc-finger motif lies at 110–137 (NKCWSCGQVFSSNSELCGHLHALEIPQL). Positions 253–582 (DESYFGSYSS…DECPAVMIRS (330 aa)) constitute an SAM-dependent MTase PRMT-type domain. Arginine 275, glycine 299, aspartate 321, serine 323, and glutamate 364 together coordinate S-adenosyl-L-homocysteine. Residues glutamate 383 and glutamate 392 contribute to the active site.

This sequence belongs to the class I-like SAM-binding methyltransferase superfamily. Protein arginine N-methyltransferase family.

It is found in the cytoplasm. The protein resides in the cytosol. The enzyme catalyses L-arginyl-[protein] + S-adenosyl-L-methionine = N(omega)-methyl-L-arginyl-[protein] + S-adenosyl-L-homocysteine + H(+). It carries out the reaction L-arginyl-[protein] + 2 S-adenosyl-L-methionine = N(omega),N(omega)-dimethyl-L-arginyl-[protein] + 2 S-adenosyl-L-homocysteine + 2 H(+). Functionally, protein-arginine N-methyltransferase that catalyzes both the monomethylation and asymmetric dimethylation of the guanidino nitrogens of arginine residues in target proteins, and therefore falls into the group of type I methyltransferases. This chain is Probable protein arginine N-methyltransferase 3 (PRMT3), found in Oryza sativa subsp. japonica (Rice).